The primary structure comprises 388 residues: Galactokinase (388 aa).

33-36 (EHTD) contributes to the substrate binding site. ATP-binding positions include serine 67 and 125 to 131 (GAGLSSS). Positions 131 and 163 each coordinate Mg(2+). Aspartate 175 (proton acceptor) is an active-site residue. Position 225 (tyrosine 225) interacts with substrate.

This sequence belongs to the GHMP kinase family. GalK subfamily.

The protein localises to the cytoplasm. It carries out the reaction alpha-D-galactose + ATP = alpha-D-galactose 1-phosphate + ADP + H(+). The protein operates within carbohydrate metabolism; galactose metabolism. Catalyzes the transfer of the gamma-phosphate of ATP to D-galactose to form alpha-D-galactose-1-phosphate (Gal-1-P). The polypeptide is Galactokinase (Limosilactobacillus fermentum (strain NBRC 3956 / LMG 18251) (Lactobacillus fermentum)).